The chain runs to 557 residues: Formate--tetrahydrofolate ligase 2 (557 aa).

Position 66-73 (66-73) interacts with ATP; the sequence is TPAGEGKT.

Belongs to the formate--tetrahydrofolate ligase family.

It catalyses the reaction (6S)-5,6,7,8-tetrahydrofolate + formate + ATP = (6R)-10-formyltetrahydrofolate + ADP + phosphate. It functions in the pathway one-carbon metabolism; tetrahydrofolate interconversion. The chain is Formate--tetrahydrofolate ligase 2 from Streptococcus pyogenes serotype M1.